Reading from the N-terminus, the 389-residue chain is Putative F-box/kelch-repeat protein At4g35120 (389 aa).

The F-box domain maps to 24-70 (SMSISSLPDEIVLSFLALISKSYYRSLSLVSKSFYSLLSSTEIYAAR). Kelch repeat units follow at residues 128-174 (EIYK…FLDG), 176-225 (IYVI…AVSG), and 227-273 (RLYV…MKPI).

The protein is Putative F-box/kelch-repeat protein At4g35120 of Arabidopsis thaliana (Mouse-ear cress).